Here is a 481-residue protein sequence, read N- to C-terminus: Aspartyl/glutamyl-tRNA(Asn/Gln) amidotransferase subunit B (481 aa).

Belongs to the GatB/GatE family. GatB subfamily. As to quaternary structure, heterotrimer of A, B and C subunits.

The enzyme catalyses L-glutamyl-tRNA(Gln) + L-glutamine + ATP + H2O = L-glutaminyl-tRNA(Gln) + L-glutamate + ADP + phosphate + H(+). The catalysed reaction is L-aspartyl-tRNA(Asn) + L-glutamine + ATP + H2O = L-asparaginyl-tRNA(Asn) + L-glutamate + ADP + phosphate + 2 H(+). Functionally, allows the formation of correctly charged Asn-tRNA(Asn) or Gln-tRNA(Gln) through the transamidation of misacylated Asp-tRNA(Asn) or Glu-tRNA(Gln) in organisms which lack either or both of asparaginyl-tRNA or glutaminyl-tRNA synthetases. The reaction takes place in the presence of glutamine and ATP through an activated phospho-Asp-tRNA(Asn) or phospho-Glu-tRNA(Gln). In Pseudomonas syringae pv. syringae (strain B728a), this protein is Aspartyl/glutamyl-tRNA(Asn/Gln) amidotransferase subunit B.